The sequence spans 122 residues: S-adenosylmethionine decarboxylase proenzyme (122 aa).

Ser-69 functions as the Schiff-base intermediate with substrate; via pyruvic acid in the catalytic mechanism. The residue at position 69 (Ser-69) is a Pyruvic acid (Ser); by autocatalysis. Catalysis depends on His-74, which acts as the Proton acceptor; for processing activity. The Proton donor; for catalytic activity role is filled by Cys-89.

This sequence belongs to the prokaryotic AdoMetDC family. Type 1 subfamily. Heterotetramer of two alpha and two beta chains arranged as a dimer of alpha/beta heterodimers. It depends on pyruvate as a cofactor. In terms of processing, is synthesized initially as an inactive proenzyme. Formation of the active enzyme involves a self-maturation process in which the active site pyruvoyl group is generated from an internal serine residue via an autocatalytic post-translational modification. Two non-identical subunits are generated from the proenzyme in this reaction, and the pyruvate is formed at the N-terminus of the alpha chain, which is derived from the carboxyl end of the proenzyme. The post-translation cleavage follows an unusual pathway, termed non-hydrolytic serinolysis, in which the side chain hydroxyl group of the serine supplies its oxygen atom to form the C-terminus of the beta chain, while the remainder of the serine residue undergoes an oxidative deamination to produce ammonia and the pyruvoyl group blocking the N-terminus of the alpha chain.

It catalyses the reaction S-adenosyl-L-methionine + H(+) = S-adenosyl 3-(methylsulfanyl)propylamine + CO2. Its pathway is amine and polyamine biosynthesis; S-adenosylmethioninamine biosynthesis; S-adenosylmethioninamine from S-adenosyl-L-methionine: step 1/1. Functionally, catalyzes the decarboxylation of S-adenosylmethionine to S-adenosylmethioninamine (dcAdoMet), the propylamine donor required for the synthesis of the polyamines spermine and spermidine from the diamine putrescine. This is S-adenosylmethionine decarboxylase proenzyme from Sulfolobus acidocaldarius (strain ATCC 33909 / DSM 639 / JCM 8929 / NBRC 15157 / NCIMB 11770).